The following is a 465-amino-acid chain: tRNA modification GTPase MnmE (465 aa).

(6S)-5-formyl-5,6,7,8-tetrahydrofolate contacts are provided by arginine 25, glutamate 87, and arginine 126. A TrmE-type G domain is found at threonine 222–glutamate 386. Residues asparagine 232–arginine 237, threonine 251–threonine 257, and aspartate 276–glycine 279 contribute to the GTP site. Mg(2+) contacts are provided by serine 236 and threonine 257. Residue lysine 465 coordinates (6S)-5-formyl-5,6,7,8-tetrahydrofolate.

Belongs to the TRAFAC class TrmE-Era-EngA-EngB-Septin-like GTPase superfamily. TrmE GTPase family. In terms of assembly, homodimer. Heterotetramer of two MnmE and two MnmG subunits. K(+) serves as cofactor.

The protein resides in the cytoplasm. In terms of biological role, exhibits a very high intrinsic GTPase hydrolysis rate. Involved in the addition of a carboxymethylaminomethyl (cmnm) group at the wobble position (U34) of certain tRNAs, forming tRNA-cmnm(5)s(2)U34. In Rhodopirellula baltica (strain DSM 10527 / NCIMB 13988 / SH1), this protein is tRNA modification GTPase MnmE.